The following is a 259-amino-acid chain: Gem-associated protein 2 (259 aa).

This sequence belongs to the gemin-2 family. Forms a stable heteromeric complex with survival of motor neuron protein (SMN), GEMIN3 and GEMIN4. The SMN complex is associated with the spliceosomal snRNAs U1 and U5 in the cytoplasm of oocytes.

The protein resides in the nucleus. The protein localises to the gem. Its subcellular location is the cytoplasm. The SMN complex catalyzes the assembly of small nuclear ribonucleoproteins (snRNPs), the building blocks of the spliceosome, and thereby plays an important role in the splicing of cellular pre-mRNAs. Most spliceosomal snRNPs contain a common set of Sm proteins SNRPB, SNRPD1, SNRPD2, SNRPD3, SNRPE, SNRPF and SNRPG that assemble in a heptameric protein ring on the Sm site of the small nuclear RNA to form the core snRNP (Sm core). In the cytosol, the Sm proteins SNRPD1, SNRPD2, SNRPE, SNRPF and SNRPG (5Sm) are trapped in an inactive 6S pICln-Sm complex by the chaperone CLNS1A that controls the assembly of the core snRNP. To assemble core snRNPs, the SMN complex accepts the trapped 5Sm proteins from CLNS1A. Binding of snRNA inside 5Sm ultimately triggers eviction of the SMN complex, thereby allowing binding of SNRPD3 and SNRPB to complete assembly of the core snRNP. Within the SMN complex, GEMIN2 constrains the conformation of 5Sm, thereby promoting 5Sm binding to snRNA containing the snRNP code (a nonameric Sm site and a 3'-adjacent stem-loop), thus preventing progression of assembly until a cognate substrate is bound. In Xenopus laevis (African clawed frog), this protein is Gem-associated protein 2 (gemin2).